Here is a 651-residue protein sequence, read N- to C-terminus: Acetyl-coenzyme A synthetase (651 aa).

CoA contacts are provided by residues 189-192 (RGGK), threonine 311, and asparagine 335. Residues 387–389 (GEP), 411–416 (DTWWQT), aspartate 500, and arginine 515 each bind ATP. CoA is bound at residue serine 523. An ATP-binding site is contributed by arginine 526. Positions 537, 539, and 542 each coordinate Mg(2+). Residue arginine 584 coordinates CoA. An N6-acetyllysine modification is found at lysine 609.

The protein belongs to the ATP-dependent AMP-binding enzyme family. It depends on Mg(2+) as a cofactor. Post-translationally, acetylated. Deacetylation by the SIR2-homolog deacetylase activates the enzyme.

It carries out the reaction acetate + ATP + CoA = acetyl-CoA + AMP + diphosphate. Catalyzes the conversion of acetate into acetyl-CoA (AcCoA), an essential intermediate at the junction of anabolic and catabolic pathways. AcsA undergoes a two-step reaction. In the first half reaction, AcsA combines acetate with ATP to form acetyl-adenylate (AcAMP) intermediate. In the second half reaction, it can then transfer the acetyl group from AcAMP to the sulfhydryl group of CoA, forming the product AcCoA. The protein is Acetyl-coenzyme A synthetase of Rhizobium etli (strain ATCC 51251 / DSM 11541 / JCM 21823 / NBRC 15573 / CFN 42).